A 311-amino-acid polypeptide reads, in one-letter code: Formimidoylglutamase (311 aa).

Histidine 130, aspartate 155, histidine 157, aspartate 159, cysteine 242, and aspartate 244 together coordinate Mn(2+).

It belongs to the arginase family. The cofactor is Mn(2+).

It carries out the reaction N-formimidoyl-L-glutamate + H2O = formamide + L-glutamate. The protein operates within amino-acid degradation; L-histidine degradation into L-glutamate; L-glutamate from N-formimidoyl-L-glutamate (hydrolase route): step 1/1. Catalyzes the conversion of N-formimidoyl-L-glutamate to L-glutamate and formamide. The polypeptide is Formimidoylglutamase (Staphylococcus aureus (strain MRSA252)).